The following is a 457-amino-acid chain: Multidrug resistance protein MdtK (457 aa).

The next 12 membrane-spanning stretches (helical) occupy residues 11–31 (LLAL…MGFV), 53–73 (IWLP…PVIA), 93–113 (WLAG…GYII), 127–147 (AVGY…FQVA), 160–180 (GMVM…IFIY), 188–208 (LGGI…FIAM), 243–263 (LPIA…ALLV), 276–296 (IALN…AAVT), 314–334 (AART…IFTV), 350–370 (VVAL…SDSI), 387–407 (IFFI…YILA), and 418–438 (PAGF…LMML).

Belongs to the multi antimicrobial extrusion (MATE) (TC 2.A.66.1) family. MdtK subfamily.

The protein localises to the cell inner membrane. Functionally, multidrug efflux pump that functions probably as a Na(+)/drug antiporter. In Salmonella heidelberg (strain SL476), this protein is Multidrug resistance protein MdtK.